Reading from the N-terminus, the 336-residue chain is F420-dependent glucose-6-phosphate dehydrogenase (336 aa).

Residue Asp-39 participates in coenzyme F420-(gamma-Glu)n binding. The active-site Proton donor is His-40. Residues Thr-76 and 107-108 (TG) each bind coenzyme F420-(gamma-Glu)n. Glu-109 (proton acceptor) is an active-site residue. Coenzyme F420-(gamma-Glu)n-binding positions include Asn-112, 177–178 (GG), and 180–181 (AV). The substrate site is built by Thr-195, Lys-198, Lys-259, and Arg-283.

Belongs to the F420-dependent glucose-6-phosphate dehydrogenase family. As to quaternary structure, homodimer.

The enzyme catalyses oxidized coenzyme F420-(gamma-L-Glu)(n) + D-glucose 6-phosphate + H(+) = 6-phospho-D-glucono-1,5-lactone + reduced coenzyme F420-(gamma-L-Glu)(n). Its function is as follows. Catalyzes the coenzyme F420-dependent oxidation of glucose 6-phosphate (G6P) to 6-phosphogluconolactone. Appears to have a role in resistance to oxidative stress, via its consumption of G6P that serves as a source of reducing power to combat oxidative stress in mycobacteria. This is F420-dependent glucose-6-phosphate dehydrogenase from Mycobacterium avium (strain 104).